The following is a 251-amino-acid chain: Insulin-induced gene 1 protein (251 aa).

The Cytoplasmic segment spans residues 1-58 (MQTLEEHCWSCSCTRGRDKKGTRLSTWLAQRAAKAMSSLNSLLSLAYHTLASSEGRSL). Residues 59 to 81 (IRRSLVLFAVGVFLALVLNLLQI) form a helical membrane-spanning segment. The Extracellular segment spans residues 82 to 100 (QRNVTLFPEEVIATIFSSA). The helical transmembrane segment at 101 to 118 (WWVPPCCGTAAAVVGLLY) threads the bilayer. Residues 119-133 (PCIDSHLGEPHKFKR) are Cytoplasmic-facing. A helical transmembrane segment spans residues 134 to 156 (EWASVMRCIAVFVGINHASAKLD). The Extracellular segment spans residues 157–159 (FAN). The helical transmembrane segment at 160–178 (NVQLSLTLAALSLGLWWTF) threads the bilayer. Topologically, residues 179–183 (DRSRS) are cytoplasmic. The helical transmembrane segment at 184 to 205 (GLGLGITIAFLATLITQFLVYN) threads the bilayer. Residues 206–219 (GVYQYTSPDFLYIR) are Extracellular-facing. A helical transmembrane segment spans residues 220 to 237 (SWLPCIFFSGGVTVGNIG). Topologically, residues 238–251 (RQLAMGSSEKTHSD) are cytoplasmic. Positions 245–251 (SEKTHSD) match the KxHxx motif.

Belongs to the INSIG family. In terms of assembly, interacts with scap; interaction is direct and only takes place in the presence of sterols; it prevents interaction between scap and the coat protein complex II (COPII). Associates with the SCAP-SREBP complex; association is mediated via its interaction with scap and only takes place in the presence of sterols.

The protein resides in the endoplasmic reticulum membrane. Functionally, oxysterol-binding protein that mediates feedback control of cholesterol synthesis by controlling both endoplasmic reticulum to Golgi transport of scap and degradation of hmgcr. Acts as a negative regulator of cholesterol biosynthesis by mediating the retention of the SCAP-SREBP complex in the endoplasmic reticulum, thereby blocking the processing of sterol regulatory element-binding proteins (SREBPs). Binds oxysterol, including 25-hydroxycholesterol, regulating interaction with scap and retention of the SCAP-SREBP complex in the endoplasmic reticulum. In presence of oxysterol, interacts with scap, retaining the SCAP-SREBP complex in the endoplasmic reticulum, thereby preventing scap from escorting SREBPs to the Golgi. Sterol deprivation reduces oxysterol-binding, disrupting the interaction between insig1 and scap, thereby promoting Golgi transport of the SCAP-SREBP complex, followed by processing and nuclear translocation of SREBPs. Also regulates cholesterol synthesis by regulating degradation of hmgcr. In Xenopus tropicalis (Western clawed frog), this protein is Insulin-induced gene 1 protein.